The chain runs to 981 residues: DNA ligase 4 (981 aa).

E320, K322, R327, E380, F424, E484, K489, K506, and K508 together coordinate ATP. The N6-AMP-lysine intermediate role is filled by K322. Position 380 (E380) interacts with Mg(2+). E484 contacts Mg(2+). The disordered stretch occupies residues 544–563; the sequence is SEKNNPSSYESGSDSDSDSE. 2 consecutive BRCT domains span residues 721-819 and 875-980; these read SKAD…PKYV and ERLL…EYAA.

It belongs to the ATP-dependent DNA ligase family. It depends on Mg(2+) as a cofactor.

Its subcellular location is the nucleus. It carries out the reaction ATP + (deoxyribonucleotide)n-3'-hydroxyl + 5'-phospho-(deoxyribonucleotide)m = (deoxyribonucleotide)n+m + AMP + diphosphate.. In terms of biological role, DNA ligase involved in DNA non-homologous end joining (NHEJ); required for double-strand break (DSB) repair. This Eremothecium gossypii (strain ATCC 10895 / CBS 109.51 / FGSC 9923 / NRRL Y-1056) (Yeast) protein is DNA ligase 4 (LIG4).